The chain runs to 865 residues: Leucine--tRNA ligase (865 aa).

Residues 44–54 (PYPSGRIHVGH) carry the 'HIGH' region motif. A 'KMSKS' region motif is present at residues 625 to 629 (KMSKS). Position 628 (K628) interacts with ATP.

This sequence belongs to the class-I aminoacyl-tRNA synthetase family.

It localises to the cytoplasm. It catalyses the reaction tRNA(Leu) + L-leucine + ATP = L-leucyl-tRNA(Leu) + AMP + diphosphate. This is Leucine--tRNA ligase from Maricaulis maris (strain MCS10) (Caulobacter maris).